Consider the following 86-residue polypeptide: Small ribosomal subunit protein bS20 (86 aa).

Belongs to the bacterial ribosomal protein bS20 family.

Its function is as follows. Binds directly to 16S ribosomal RNA. The polypeptide is Small ribosomal subunit protein bS20 (Buchnera aphidicola subsp. Cinara cedri (strain Cc)).